The following is a 2367-amino-acid chain: RNA1 polyprotein (2367 aa).

The Cytoplasmic portion of the chain corresponds to 587–1194 (AKCEDLAVVS…GGRLLLILCS (608 aa)). Residues 776–940 (ELRTLRNDMA…AGVAFNPHDS (165 aa)) enclose the SF3 helicase domain. 804–811 (GPPGVGKT) contributes to the ATP binding site. The chain crosses the membrane as a helical span at residues 1195-1215 (CMLLGIACYTFFNALAILIGG). Residues 1216–1235 (TSVAAGAAAMVDIGACGSTS) lie on the Lumenal side of the membrane. A Peptidase C3 domain is found at 1258–1468 (PAVWSEETGH…YVCKFPHIEV (211 aa)). Active-site for picornain 3C-like protease activity residues include His-1302, Glu-1339, and Cys-1432. The RdRp catalytic domain maps to 1832 to 1957 (DKMYCCDYSK…GIHPNIESAF (126 aa)).

The protein belongs to the nepoviruses RNA1 polyprotein family. Specific enzymatic cleavages by picornain 3C-like protease in vivo yield mature proteins. Picornain 3C-like protease is autocatalytically processed. In terms of processing, VPg is uridylylated by the polymerase and is covalently linked to the 5'-end of genomic RNA. This uridylylated form acts as a nucleotide-peptide primer for the polymerase.

Its subcellular location is the host endoplasmic reticulum lumen. It is found in the host endoplasmic reticulum membrane. It catalyses the reaction RNA(n) + a ribonucleoside 5'-triphosphate = RNA(n+1) + diphosphate. Picornain 3C-like protease is a thiol protease that cleaves the P1 and P2 polyproteins. This chain is RNA1 polyprotein, found in Fragaria vesca (Woodland strawberry).